Reading from the N-terminus, the 442-residue chain is Hydroxycinnamoyltransferase 2 (442 aa).

Active-site proton acceptor residues include His-159 and Asp-389.

The protein belongs to the plant acyltransferase family. As to expression, expressed in roots and leaves. Expressed at low levels in stems and seeds.

Hydroxycinnamoyl transferase that catalyzes the transfer of an acyl from p-coumaryol-CoA to various acyl acceptors. Can use feruloyl-CoA and caffeoyl-CoA as acyl donors. The chain is Hydroxycinnamoyltransferase 2 from Oryza sativa subsp. japonica (Rice).